The following is a 375-amino-acid chain: Queuine tRNA-ribosyltransferase (375 aa).

The Proton acceptor role is filled by Asp-89. Residues 89–93 (DSGGF), Asp-143, Gln-187, and Gly-214 contribute to the substrate site. The segment at 245-251 (GVGKPED) is RNA binding. Asp-264 (nucleophile) is an active-site residue. An RNA binding; important for wobble base 34 recognition region spans residues 269 to 273 (TRNAR). The Zn(2+) site is built by Cys-302, Cys-304, Cys-307, and His-333.

It belongs to the queuine tRNA-ribosyltransferase family. In terms of assembly, homodimer. Within each dimer, one monomer is responsible for RNA recognition and catalysis, while the other monomer binds to the replacement base PreQ1. The cofactor is Zn(2+).

It catalyses the reaction 7-aminomethyl-7-carbaguanine + guanosine(34) in tRNA = 7-aminomethyl-7-carbaguanosine(34) in tRNA + guanine. The protein operates within tRNA modification; tRNA-queuosine biosynthesis. In terms of biological role, catalyzes the base-exchange of a guanine (G) residue with the queuine precursor 7-aminomethyl-7-deazaguanine (PreQ1) at position 34 (anticodon wobble position) in tRNAs with GU(N) anticodons (tRNA-Asp, -Asn, -His and -Tyr). Catalysis occurs through a double-displacement mechanism. The nucleophile active site attacks the C1' of nucleotide 34 to detach the guanine base from the RNA, forming a covalent enzyme-RNA intermediate. The proton acceptor active site deprotonates the incoming PreQ1, allowing a nucleophilic attack on the C1' of the ribose to form the product. After dissociation, two additional enzymatic reactions on the tRNA convert PreQ1 to queuine (Q), resulting in the hypermodified nucleoside queuosine (7-(((4,5-cis-dihydroxy-2-cyclopenten-1-yl)amino)methyl)-7-deazaguanosine). The sequence is that of Queuine tRNA-ribosyltransferase from Escherichia coli O81 (strain ED1a).